The sequence spans 166 residues: Urease accessory protein UreE (166 aa).

This sequence belongs to the UreE family.

It localises to the cytoplasm. Functionally, involved in urease metallocenter assembly. Binds nickel. Probably functions as a nickel donor during metallocenter assembly. The sequence is that of Urease accessory protein UreE from Azotobacter vinelandii (strain DJ / ATCC BAA-1303).